We begin with the raw amino-acid sequence, 852 residues long: 2-deoxy-glucose resistant protein 2 (852 aa).

Polar residues predominate over residues 1–18 (MFKSKTSTLSYDETPNSN). Residues 1–60 (MFKSKTSTLSYDETPNSNEGDRNATPVNPKEKSQTKHLNIPGDRSRHSSIADSKRSSSRY) are disordered. 6 WD repeats span residues 171–210 (LFKN…VKRS), 278–316 (EHAL…SLKT), 318–358 (VHPD…VSYA), 426–471 (QHGP…ELFK), 476–515 (GSSR…LSAE), and 651–689 (GFSS…EIRK). Ser716 is modified (phosphoserine). A disordered region spans residues 723–748 (DERSSTEDNEFSTTPPSNTHNSRPSH). The segment covering 733–744 (FSTTPPSNTHNS) has biased composition (polar residues).

Belongs to the WD repeat DGR2 family.

In Saccharomyces cerevisiae (strain ATCC 204508 / S288c) (Baker's yeast), this protein is 2-deoxy-glucose resistant protein 2 (DGR2).